Here is a 265-residue protein sequence, read N- to C-terminus: Type III pantothenate kinase (265 aa).

ATP is bound at residue 17–24 (DIGNTSIS). 114–117 (GSDV) is a binding site for substrate. Asp-116 functions as the Proton acceptor in the catalytic mechanism. Asp-137 lines the K(+) pocket. ATP is bound at residue Thr-140. Thr-192 is a substrate binding site.

The protein belongs to the type III pantothenate kinase family. As to quaternary structure, homodimer. The cofactor is NH4(+). It depends on K(+) as a cofactor.

The protein localises to the cytoplasm. It carries out the reaction (R)-pantothenate + ATP = (R)-4'-phosphopantothenate + ADP + H(+). Its pathway is cofactor biosynthesis; coenzyme A biosynthesis; CoA from (R)-pantothenate: step 1/5. Functionally, catalyzes the phosphorylation of pantothenate (Pan), the first step in CoA biosynthesis. This Borrelia hermsii (strain HS1 / DAH) protein is Type III pantothenate kinase.